Here is a 72-residue protein sequence, read N- to C-terminus: Translation initiation factor IF-1 (72 aa).

The region spanning 1-72 is the S1-like domain; the sequence is MAKEETIQMQ…TRARITFRTK (72 aa).

The protein belongs to the IF-1 family. In terms of assembly, component of the 30S ribosomal translation pre-initiation complex which assembles on the 30S ribosome in the order IF-2 and IF-3, IF-1 and N-formylmethionyl-tRNA(fMet); mRNA recruitment can occur at any time during PIC assembly.

The protein localises to the cytoplasm. In terms of biological role, one of the essential components for the initiation of protein synthesis. Stabilizes the binding of IF-2 and IF-3 on the 30S subunit to which N-formylmethionyl-tRNA(fMet) subsequently binds. Helps modulate mRNA selection, yielding the 30S pre-initiation complex (PIC). Upon addition of the 50S ribosomal subunit IF-1, IF-2 and IF-3 are released leaving the mature 70S translation initiation complex. The chain is Translation initiation factor IF-1 from Nitrosomonas eutropha (strain DSM 101675 / C91 / Nm57).